A 508-amino-acid chain; its full sequence is Light-independent protochlorophyllide reductase subunit B (508 aa).

Asp-36 provides a ligand contact to [4Fe-4S] cluster. Asp-294 (proton donor) is an active-site residue. Substrate is bound at residue 429–430 (GM).

It belongs to the ChlB/BchB/BchZ family. Protochlorophyllide reductase is composed of three subunits; ChlL, ChlN and ChlB. Forms a heterotetramer of two ChlB and two ChlN subunits. The cofactor is [4Fe-4S] cluster.

The protein resides in the plastid. The protein localises to the chloroplast. It catalyses the reaction chlorophyllide a + oxidized 2[4Fe-4S]-[ferredoxin] + 2 ADP + 2 phosphate = protochlorophyllide a + reduced 2[4Fe-4S]-[ferredoxin] + 2 ATP + 2 H2O. It functions in the pathway porphyrin-containing compound metabolism; chlorophyll biosynthesis (light-independent). Component of the dark-operative protochlorophyllide reductase (DPOR) that uses Mg-ATP and reduced ferredoxin to reduce ring D of protochlorophyllide (Pchlide) to form chlorophyllide a (Chlide). This reaction is light-independent. The NB-protein (ChlN-ChlB) is the catalytic component of the complex. This is Light-independent protochlorophyllide reductase subunit B from Pyropia yezoensis (Susabi-nori).